Reading from the N-terminus, the 1456-residue chain is Macrophage mannose receptor 1 (1456 aa).

An N-terminal signal peptide occupies residues methionine 1 to leucine 18. The Extracellular segment spans residues leucine 19–alanine 1389. One can recognise a Ricin B-type lectin domain in the interval threonine 22–tyrosine 142. Disulfide bonds link cysteine 35/cysteine 49 and cysteine 74/cysteine 91. Asparagine 104 carries N-linked (GlcNAc...) asparagine glycosylation. The Fibronectin type-II domain maps to alanine 163–leucine 211. 4 disulfide bridges follow: cysteine 168–cysteine 194, cysteine 182–cysteine 209, cysteine 247–cysteine 340, and cysteine 316–cysteine 332. One can recognise a C-type lectin 1 domain in the interval leucine 225 to lysine 341. An N-linked (GlcNAc...) asparagine glycan is attached at asparagine 344. C-type lectin domains follow at residues tyrosine 369–lysine 487, histidine 511–lysine 626, arginine 655–glutamine 778, and tyrosine 807–glutamine 923. Cystine bridges form between cysteine 391-cysteine 486 and cysteine 463-cysteine 478. Asparagine 529 carries an N-linked (GlcNAc...) asparagine glycan. Disulfide bonds link cysteine 532–cysteine 625, cysteine 600–cysteine 617, cysteine 646–cysteine 659, cysteine 680–cysteine 777, cysteine 753–cysteine 769, cysteine 828–cysteine 922, and cysteine 899–cysteine 914. Residues asparagine 926 and asparagine 930 are each glycosylated (N-linked (GlcNAc...) asparagine). C-type lectin domains lie at tyrosine 952–glutamine 1080, tyrosine 1102–lysine 1213, and phenylalanine 1241–lysine 1356. Cystine bridges form between cysteine 977–cysteine 1079, cysteine 1052–cysteine 1071, cysteine 1123–cysteine 1212, cysteine 1190–cysteine 1204, cysteine 1263–cysteine 1355, and cysteine 1332–cysteine 1347. Asparagine 1160 carries an N-linked (GlcNAc...) asparagine glycan. N-linked (GlcNAc...) asparagine glycosylation is present at asparagine 1205. Residues glycine 1390 to phenylalanine 1410 traverse the membrane as a helical segment. At tyrosine 1411–isoleucine 1456 the chain is on the cytoplasmic side.

(Microbial infection) Interacts with Dengue virus. As to quaternary structure, (Microbial infection) May act as a receptor for hepatitis B virus, enabling uptake of the virus in hepatic dendritic cells.

The protein localises to the endosome membrane. Its subcellular location is the cell membrane. In terms of biological role, mediates the endocytosis of glycoproteins by macrophages. Binds both sulfated and non-sulfated polysaccharide chains. Functionally, (Microbial infection) Acts as a phagocytic receptor for bacteria, fungi and other pathogens. Its function is as follows. (Microbial infection) Acts as a receptor for Dengue virus envelope protein E. (Microbial infection) Interacts with Hepatitis B virus envelope protein. The chain is Macrophage mannose receptor 1 (MRC1) from Homo sapiens (Human).